The chain runs to 172 residues: NADH-ubiquinone oxidoreductase chain 6 (172 aa).

Helical transmembrane passes span 1–21, 24–44, 53–73, 86–106, and 140–160; these read MAFY…AIAS, APYF…GILV, LILF…SAAL, VVFW…GFLL, and GKML…VLEV.

Belongs to the complex I subunit 6 family. As to quaternary structure, core subunit of respiratory chain NADH dehydrogenase (Complex I) which is composed of 45 different subunits.

The protein resides in the mitochondrion inner membrane. The catalysed reaction is a ubiquinone + NADH + 5 H(+)(in) = a ubiquinol + NAD(+) + 4 H(+)(out). Its function is as follows. Core subunit of the mitochondrial membrane respiratory chain NADH dehydrogenase (Complex I) which catalyzes electron transfer from NADH through the respiratory chain, using ubiquinone as an electron acceptor. Essential for the catalytic activity and assembly of complex I. The chain is NADH-ubiquinone oxidoreductase chain 6 (mt-nd6) from Danio rerio (Zebrafish).